Here is a 428-residue protein sequence, read N- to C-terminus: MNPNQKIMTIGSICMVIGMISLVLQIGNMISIWASHSIQKMNQHQTEPCNQSIITYENNTWVNQTYVNISNTNFLTEKVVASIALSGNSSLCPISGWAVYSKDNGIRIGSKGDVFVIREPFISCSHLECRTFFLTQGSLLNDKHSNGTVKDRSPYRTLMSCPVGEAPSPYNSRFESVAWSASACHDGTSWLTIGISGPDNGAVAVLKYNGIITDTIKSWRNSILRTQESECACVNGSCFTVMTDGPSNGQASYKIFKIEKGKVVKSVELNAPNYHYEECSCYPDAGEITCVCRDNWHGSNRPWVSFDQNLEYQIGYICSGVFGDNPRPNDGTGSCDPVLPNGAYGVKGFSFKYGDGVWIGRTKSTNSRSGFEMIWDPNGWTGTDSNFSLKQDIVAMTDWSGYSGSFVQHPEMSGLDCIRPCLWVEPIR.

The Intravirion portion of the chain corresponds to 1-6 (MNPNQK). The chain crosses the membrane as a helical span at residues 7 to 27 (IMTIGSICMVIGMISLVLQIG). The involved in apical transport and lipid raft association stretch occupies residues 11 to 33 (GSICMVIGMISLVLQIGNMISIW). The Virion surface portion of the chain corresponds to 28-428 (NMISIWASHS…RPCLWVEPIR (401 aa)). Residues 36–90 (HSIQKMNQHQTEPCNQSIITYENNTWVNQTYVNISNTNFLTEKVVASIALSGNSS) form a hypervariable stalk region region. Residues Asn-50, Asn-58, Asn-63, Asn-68, and Asn-88 are each glycosylated (N-linked (GlcNAc...) asparagine; by host). The tract at residues 91–428 (LCPISGWAVY…RPCLWVEPIR (338 aa)) is head of neuraminidase. Disulfide bonds link Cys-92–Cys-417, Cys-124–Cys-129, Cys-184–Cys-231, Cys-233–Cys-238, Cys-279–Cys-292, Cys-281–Cys-290, and Cys-318–Cys-335. Residue Arg-118 participates in substrate binding. N-linked (GlcNAc...) asparagine; by host glycosylation is present at Asn-146. Asp-151 (proton donor/acceptor) is an active-site residue. Arg-152 is a binding site for substrate. Asn-235 is a glycosylation site (N-linked (GlcNAc...) asparagine; by host). Position 277–278 (277–278 (EE)) interacts with substrate. Arg-293 is a substrate binding site. Residues Asp-294, Gly-298, and Asp-324 each contribute to the Ca(2+) site. Arg-368 is a substrate binding site. Asn-386 is a glycosylation site (N-linked (GlcNAc...) asparagine; by host). Tyr-402 functions as the Nucleophile in the catalytic mechanism.

The protein belongs to the glycosyl hydrolase 34 family. In terms of assembly, homotetramer. Requires Ca(2+) as cofactor. In terms of processing, N-glycosylated.

The protein localises to the virion membrane. It localises to the host apical cell membrane. It catalyses the reaction Hydrolysis of alpha-(2-&gt;3)-, alpha-(2-&gt;6)-, alpha-(2-&gt;8)- glycosidic linkages of terminal sialic acid residues in oligosaccharides, glycoproteins, glycolipids, colominic acid and synthetic substrates.. Its activity is regulated as follows. Inhibited by the neuraminidase inhibitors zanamivir (Relenza) and oseltamivir (Tamiflu). These drugs interfere with the release of progeny virus from infected cells and are effective against all influenza strains. Resistance to neuraminidase inhibitors is quite rare. Functionally, catalyzes the removal of terminal sialic acid residues from viral and cellular glycoconjugates. Cleaves off the terminal sialic acids on the glycosylated HA during virus budding to facilitate virus release. Additionally helps virus spread through the circulation by further removing sialic acids from the cell surface. These cleavages prevent self-aggregation and ensure the efficient spread of the progeny virus from cell to cell. Otherwise, infection would be limited to one round of replication. Described as a receptor-destroying enzyme because it cleaves a terminal sialic acid from the cellular receptors. May facilitate viral invasion of the upper airways by cleaving the sialic acid moieties on the mucin of the airway epithelial cells. Likely to plays a role in the budding process through its association with lipid rafts during intracellular transport. May additionally display a raft-association independent effect on budding. Plays a role in the determination of host range restriction on replication and virulence. Sialidase activity in late endosome/lysosome traffic seems to enhance virus replication. The protein is Neuraminidase of Aves (Cat).